Consider the following 548-residue polypeptide: Chaperonin GroEL (548 aa).

ATP is bound by residues 29–32, K50, 86–90, G413, 479–481, and D496; these read TLGP, DGTTT, and NAA.

Belongs to the chaperonin (HSP60) family. Forms a cylinder of 14 subunits composed of two heptameric rings stacked back-to-back. Interacts with the co-chaperonin GroES.

It is found in the cytoplasm. The enzyme catalyses ATP + H2O + a folded polypeptide = ADP + phosphate + an unfolded polypeptide.. Together with its co-chaperonin GroES, plays an essential role in assisting protein folding. The GroEL-GroES system forms a nano-cage that allows encapsulation of the non-native substrate proteins and provides a physical environment optimized to promote and accelerate protein folding. This Deinococcus radiodurans (strain ATCC 13939 / DSM 20539 / JCM 16871 / CCUG 27074 / LMG 4051 / NBRC 15346 / NCIMB 9279 / VKM B-1422 / R1) protein is Chaperonin GroEL.